The chain runs to 74 residues: Conotoxin Cal27 (74 aa).

The signal sequence occupies residues 1–19 (MSGTGVLLLTLLLLVAMAA).

Post-translationally, may contain 4 disulfide bonds. As to expression, expressed by the venom duct.

Its subcellular location is the secreted. Functionally, probable neurotoxin. The protein is Conotoxin Cal27 of Californiconus californicus (California cone).